Reading from the N-terminus, the 436-residue chain is Serine--tRNA ligase (436 aa).

An L-serine-binding site is contributed by 239–241 (TAE). 270–272 (RKE) contacts ATP. An L-serine-binding site is contributed by glutamate 293. Residue 357 to 360 (EISS) coordinates ATP. Serine 392 contributes to the L-serine binding site.

The protein belongs to the class-II aminoacyl-tRNA synthetase family. Type-1 seryl-tRNA synthetase subfamily. In terms of assembly, homodimer. The tRNA molecule binds across the dimer.

The protein resides in the cytoplasm. It catalyses the reaction tRNA(Ser) + L-serine + ATP = L-seryl-tRNA(Ser) + AMP + diphosphate + H(+). The catalysed reaction is tRNA(Sec) + L-serine + ATP = L-seryl-tRNA(Sec) + AMP + diphosphate + H(+). It participates in aminoacyl-tRNA biosynthesis; selenocysteinyl-tRNA(Sec) biosynthesis; L-seryl-tRNA(Sec) from L-serine and tRNA(Sec): step 1/1. Catalyzes the attachment of serine to tRNA(Ser). Is also able to aminoacylate tRNA(Sec) with serine, to form the misacylated tRNA L-seryl-tRNA(Sec), which will be further converted into selenocysteinyl-tRNA(Sec). The sequence is that of Serine--tRNA ligase from Leuconostoc citreum (strain KM20).